The primary structure comprises 1167 residues: PH and Rap-GAP domain-containing protein DDB_G0271806 (1167 aa).

2 PH domains span residues Asn35–Leu140 and His165–Pro257. Positions Gly95–Ser160 are disordered. Positions Asn98–Thr155 are enriched in low complexity. 3 disordered regions span residues Ser335–Leu361, Trp376–Val400, and Tyr645–Glu734. Low complexity predominate over residues Asn340–Gln351. Polar residues predominate over residues Ser648 to Leu676. Residues Glu687–Glu732 are compositionally biased toward low complexity. The 213-residue stretch at Leu950–Tyr1162 folds into the Rap-GAP domain.

This chain is PH and Rap-GAP domain-containing protein DDB_G0271806, found in Dictyostelium discoideum (Social amoeba).